A 438-amino-acid chain; its full sequence is Glyceraldehyde-3-phosphate dehydrogenase B, chloroplastic (438 aa).

A chloroplast-targeting transit peptide spans 1–53 (CLSKKFEVAEFAGLRSSGCVTFSNKESSFFDVVSAQLTPKTTRSTPVKGETVA). NADP(+) is bound by residues 64–65 (RI), D88, and R133. Residues 207 to 209 (SCT), T238, R253, 266 to 267 (TG), and R289 each bind D-glyceraldehyde 3-phosphate. C208 (nucleophile) is an active-site residue. Residue N372 participates in NADP(+) binding.

The protein belongs to the glyceraldehyde-3-phosphate dehydrogenase family. Tetramer of either four A chains (GAPDH 2) or two A and two B chains (GAPDH 1).

It is found in the plastid. The protein localises to the chloroplast. It catalyses the reaction D-glyceraldehyde 3-phosphate + phosphate + NADP(+) = (2R)-3-phospho-glyceroyl phosphate + NADPH + H(+). The protein operates within carbohydrate biosynthesis; Calvin cycle. The sequence is that of Glyceraldehyde-3-phosphate dehydrogenase B, chloroplastic (GAPB) from Nicotiana tabacum (Common tobacco).